A 307-amino-acid chain; its full sequence is Ornithine carbamoyltransferase (307 aa).

Carbamoyl phosphate contacts are provided by residues 53 to 56, Gln-80, Arg-104, and 131 to 134; these read STRT and HPCQ. Residues Asn-162, Asp-219, and 223 to 224 each bind L-ornithine; that span reads SM. Carbamoyl phosphate-binding positions include 259-260 and Arg-287; that span reads CL.

The protein belongs to the aspartate/ornithine carbamoyltransferase superfamily. OTCase family.

It is found in the cytoplasm. It catalyses the reaction carbamoyl phosphate + L-ornithine = L-citrulline + phosphate + H(+). It functions in the pathway amino-acid biosynthesis; L-arginine biosynthesis; L-arginine from L-ornithine and carbamoyl phosphate: step 1/3. Its function is as follows. Reversibly catalyzes the transfer of the carbamoyl group from carbamoyl phosphate (CP) to the N(epsilon) atom of ornithine (ORN) to produce L-citrulline. The chain is Ornithine carbamoyltransferase from Psychrobacter arcticus (strain DSM 17307 / VKM B-2377 / 273-4).